A 134-amino-acid polypeptide reads, in one-letter code: Small ribosomal subunit protein uS11 (134 aa).

Belongs to the universal ribosomal protein uS11 family. In terms of assembly, part of the 30S ribosomal subunit. Interacts with proteins S7 and S18. Binds to IF-3.

Functionally, located on the platform of the 30S subunit, it bridges several disparate RNA helices of the 16S rRNA. Forms part of the Shine-Dalgarno cleft in the 70S ribosome. This Frankia alni (strain DSM 45986 / CECT 9034 / ACN14a) protein is Small ribosomal subunit protein uS11.